A 104-amino-acid chain; its full sequence is Pyrimidine/purine nucleoside phosphorylase (104 aa).

This sequence belongs to the nucleoside phosphorylase PpnP family.

It catalyses the reaction a purine D-ribonucleoside + phosphate = a purine nucleobase + alpha-D-ribose 1-phosphate. The enzyme catalyses adenosine + phosphate = alpha-D-ribose 1-phosphate + adenine. The catalysed reaction is cytidine + phosphate = cytosine + alpha-D-ribose 1-phosphate. It carries out the reaction guanosine + phosphate = alpha-D-ribose 1-phosphate + guanine. It catalyses the reaction inosine + phosphate = alpha-D-ribose 1-phosphate + hypoxanthine. The enzyme catalyses thymidine + phosphate = 2-deoxy-alpha-D-ribose 1-phosphate + thymine. The catalysed reaction is uridine + phosphate = alpha-D-ribose 1-phosphate + uracil. It carries out the reaction xanthosine + phosphate = alpha-D-ribose 1-phosphate + xanthine. In terms of biological role, catalyzes the phosphorolysis of diverse nucleosides, yielding D-ribose 1-phosphate and the respective free bases. Can use uridine, adenosine, guanosine, cytidine, thymidine, inosine and xanthosine as substrates. Also catalyzes the reverse reactions. The sequence is that of Pyrimidine/purine nucleoside phosphorylase from Janthinobacterium sp. (strain Marseille) (Minibacterium massiliensis).